The primary structure comprises 452 residues: tRNA modification GTPase MnmE (452 aa).

(6S)-5-formyl-5,6,7,8-tetrahydrofolate-binding residues include Arg21, Glu78, and Lys118. A TrmE-type G domain is found at 214–375; that stretch reads GMKVVIAGRP…LREHLKKSMG (162 aa). Asn224 is a K(+) binding site. Residues 224–229, 243–249, and 268–271 contribute to the GTP site; these read NAGKSS, TNIAGTT, and DTAG. Ser228 is a Mg(2+) binding site. Residues Thr243, Ile245, and Thr248 each coordinate K(+). Thr249 provides a ligand contact to Mg(2+). Lys452 provides a ligand contact to (6S)-5-formyl-5,6,7,8-tetrahydrofolate.

Belongs to the TRAFAC class TrmE-Era-EngA-EngB-Septin-like GTPase superfamily. TrmE GTPase family. Homodimer. Heterotetramer of two MnmE and two MnmG subunits. It depends on K(+) as a cofactor.

It localises to the cytoplasm. Exhibits a very high intrinsic GTPase hydrolysis rate. Involved in the addition of a carboxymethylaminomethyl (cmnm) group at the wobble position (U34) of certain tRNAs, forming tRNA-cmnm(5)s(2)U34. In Actinobacillus pleuropneumoniae serotype 5b (strain L20), this protein is tRNA modification GTPase MnmE.